The chain runs to 233 residues: Small ribosomal subunit protein uS2 (233 aa).

It belongs to the universal ribosomal protein uS2 family.

The chain is Small ribosomal subunit protein uS2 from Clostridium botulinum (strain Alaska E43 / Type E3).